A 343-amino-acid chain; its full sequence is Probable transposase for insertion sequence element (343 aa).

This sequence belongs to the transposase mutator family.

Functionally, required for the transposition of the insertion element. This Corynebacterium diphtheriae protein is Probable transposase for insertion sequence element.